Here is an 831-residue protein sequence, read N- to C-terminus: Periplasmic nitrate reductase (831 aa).

A signal peptide (tat-type signal) is located at residues 1–29; the sequence is MKISRRDFIKQTAITATASVAGVTLPAGA. Residues 41–97 form the 4Fe-4S Mo/W bis-MGD-type domain; that stretch reads LKWSKAPCRFCGTGCGVTVAVKDNKVVATQGDPQAEVNKGLNCVKGYFLSKIMYGQD. C48, C51, C55, and C83 together coordinate [4Fe-4S] cluster. Residues K85, Q152, N177, C181, 214–221, 245–249, 264–266, M375, Q379, N485, 511–512, K534, D561, and 721–730 contribute to the Mo-bis(molybdopterin guanine dinucleotide) site; these read WGSNMAEM, STFTH, QTD, SD, and TGRVLEHWHS. W797 contacts substrate. N805 and K822 together coordinate Mo-bis(molybdopterin guanine dinucleotide).

Belongs to the prokaryotic molybdopterin-containing oxidoreductase family. NasA/NapA/NarB subfamily. In terms of assembly, component of the periplasmic nitrate reductase NapAB complex composed of NapA and NapB. The cofactor is [4Fe-4S] cluster. Mo-bis(molybdopterin guanine dinucleotide) serves as cofactor. In terms of processing, predicted to be exported by the Tat system. The position of the signal peptide cleavage has been experimentally proven.

It localises to the periplasm. The catalysed reaction is 2 Fe(II)-[cytochrome] + nitrate + 2 H(+) = 2 Fe(III)-[cytochrome] + nitrite + H2O. Its function is as follows. Catalytic subunit of the periplasmic nitrate reductase complex NapAB. Receives electrons from NapB and catalyzes the reduction of nitrate to nitrite. This chain is Periplasmic nitrate reductase, found in Cupriavidus necator (strain ATCC 17699 / DSM 428 / KCTC 22496 / NCIMB 10442 / H16 / Stanier 337) (Ralstonia eutropha).